We begin with the raw amino-acid sequence, 250 residues long: NH(3)-dependent NAD(+) synthetase (250 aa).

Residue 30–37 coordinates ATP; it reads GVSGGIDS. Asp-36 serves as a coordination point for Mg(2+). Arg-117 provides a ligand contact to deamido-NAD(+). Position 137 (Thr-137) interacts with ATP. Residue Glu-142 participates in Mg(2+) binding. Deamido-NAD(+)-binding residues include Lys-150 and Asp-157. Residues Lys-166 and Ser-188 each contribute to the ATP site. Position 234–235 (234–235) interacts with deamido-NAD(+); it reads HK.

This sequence belongs to the NAD synthetase family. In terms of assembly, homodimer.

The enzyme catalyses deamido-NAD(+) + NH4(+) + ATP = AMP + diphosphate + NAD(+) + H(+). It functions in the pathway cofactor biosynthesis; NAD(+) biosynthesis; NAD(+) from deamido-NAD(+) (ammonia route): step 1/1. In terms of biological role, catalyzes the ATP-dependent amidation of deamido-NAD to form NAD. Uses ammonia as a nitrogen source. This chain is NH(3)-dependent NAD(+) synthetase, found in Mannheimia succiniciproducens (strain KCTC 0769BP / MBEL55E).